The sequence spans 107 residues: MRPTQTMLGGGGGAPIGKHNHYLGGWGNFGGMKQRGIISYGISPNRQNPLAGTAHDAVFNTFRRVSSQFLYWAPSLVAGYYIMNWAIERNHYLNSKAGRAEFAGQEE.

A propeptide spans 1–8 (MRPTQTML) (plays a role in role in intramitochondrial sorting). At 1 to 62 (MRPTQTMLGG…TAHDAVFNTF (62 aa)) the chain is on the mitochondrial matrix side. A helical transmembrane segment spans residues 63 to 93 (RRVSSQFLYWAPSLVAGYYIMNWAIERNHYL). At 94 to 107 (NSKAGRAEFAGQEE) the chain is on the mitochondrial intermembrane side.

This sequence belongs to the UQCRQ/QCR8 family. Component of the ubiquinol-cytochrome c oxidoreductase (cytochrome b-c1 complex, complex III, CIII), a multisubunit enzyme composed of 10 subunits. The complex is composed of 3 respiratory subunits cytochrome b (cob), cytochrome c1 (cyt-1) and Rieske protein (fes-1), 2 core protein subunits pep and ucr-1, and 5 low-molecular weight protein subunits qcr6, qcr7, qcr8, qcr9 and probably NCU16844/qcr10. The complex exists as an obligatory dimer and forms supercomplexes (SCs) in the inner mitochondrial membrane with NADH-ubiquinone oxidoreductase (complex I, CI) and cytochrome c oxidase (complex IV, CIV), resulting in different assemblies (supercomplexes SCI(1)III(2), SCIII(2)IV(1) and SCIII(2)IV(2) as well as higher order I(x)III(y)IV(z) megacomplexes).

The protein localises to the mitochondrion inner membrane. In terms of biological role, component of the ubiquinol-cytochrome c oxidoreductase, a multisubunit transmembrane complex that is part of the mitochondrial electron transport chain which drives oxidative phosphorylation. The respiratory chain contains 3 multisubunit complexes succinate dehydrogenase (complex II, CII), ubiquinol-cytochrome c oxidoreductase (cytochrome b-c1 complex, complex III, CIII) and cytochrome c oxidase (complex IV, CIV), that cooperate to transfer electrons derived from NADH and succinate to molecular oxygen, creating an electrochemical gradient over the inner membrane that drives transmembrane transport and the ATP synthase. The cytochrome b-c1 complex catalyzes electron transfer from ubiquinol to cytochrome c, linking this redox reaction to translocation of protons across the mitochondrial inner membrane, with protons being carried across the membrane as hydrogens on the quinol. In the process called Q cycle, 2 protons are consumed from the matrix, 4 protons are released into the intermembrane space and 2 electrons are passed to cytochrome c. This is Cytochrome b-c1 complex subunit 8 (qcr8) from Neurospora crassa (strain ATCC 24698 / 74-OR23-1A / CBS 708.71 / DSM 1257 / FGSC 987).